We begin with the raw amino-acid sequence, 230 residues long: Proteasome subunit beta 2 (230 aa).

Residues 1–10 show a composition bias toward basic and acidic residues; it reads MHDPENRLTD. The tract at residues 1 to 29 is disordered; it reads MHDPENRLTDAYEPEVGNLPNEDSGRDEE. The propeptide at 1–35 is removed in mature form; by autocatalysis; it reads MHDPENRLTDAYEPEVGNLPNEDSGRDEENVVKTG. Threonine 36 (nucleophile) is an active-site residue.

The protein belongs to the peptidase T1B family. As to quaternary structure, the 20S proteasome core is composed of 14 alpha and 14 beta subunits that assemble into four stacked heptameric rings, resulting in a barrel-shaped structure. The two inner rings, each composed of seven catalytic beta subunits, are sandwiched by two outer rings, each composed of seven alpha subunits. The catalytic chamber with the active sites is on the inside of the barrel. Has a gated structure, the ends of the cylinder being occluded by the N-termini of the alpha-subunits. Is capped at one or both ends by the proteasome regulatory ATPase, PAN.

It is found in the cytoplasm. It carries out the reaction Cleavage of peptide bonds with very broad specificity.. With respect to regulation, the formation of the proteasomal ATPase PAN-20S proteasome complex, via the docking of the C-termini of PAN into the intersubunit pockets in the alpha-rings, triggers opening of the gate for substrate entry. Interconversion between the open-gate and close-gate conformations leads to a dynamic regulation of the 20S proteasome proteolysis activity. Functionally, component of the proteasome core, a large protease complex with broad specificity involved in protein degradation. This chain is Proteasome subunit beta 2, found in Haloarcula marismortui (strain ATCC 43049 / DSM 3752 / JCM 8966 / VKM B-1809) (Halobacterium marismortui).